A 115-amino-acid polypeptide reads, in one-letter code: Nucleoid-associated protein P9211_00201 (115 aa).

This sequence belongs to the YbaB/EbfC family. Homodimer.

It is found in the cytoplasm. It localises to the nucleoid. Binds to DNA and alters its conformation. May be involved in regulation of gene expression, nucleoid organization and DNA protection. The polypeptide is Nucleoid-associated protein P9211_00201 (Prochlorococcus marinus (strain MIT 9211)).